The primary structure comprises 122 residues: Large ribosomal subunit protein uL24 (122 aa).

It belongs to the universal ribosomal protein uL24 family. In terms of assembly, part of the 50S ribosomal subunit.

One of two assembly initiator proteins, it binds directly to the 5'-end of the 23S rRNA, where it nucleates assembly of the 50S subunit. Its function is as follows. One of the proteins that surrounds the polypeptide exit tunnel on the outside of the subunit. This is Large ribosomal subunit protein uL24 from Trichodesmium erythraeum (strain IMS101).